The chain runs to 345 residues: Anthranilate phosphoribosyltransferase (345 aa).

Residues glycine 81, 84 to 85 (GD), serine 89, 91 to 94 (NVST), 109 to 117 (KHGNRAATS), and alanine 121 contribute to the 5-phospho-alpha-D-ribose 1-diphosphate site. Glycine 81 provides a ligand contact to anthranilate. Serine 93 is a Mg(2+) binding site. Asparagine 112 lines the anthranilate pocket. Residue arginine 167 coordinates anthranilate. Mg(2+) is bound by residues aspartate 226 and glutamate 227.

The protein belongs to the anthranilate phosphoribosyltransferase family. In terms of assembly, homodimer. Requires Mg(2+) as cofactor.

The enzyme catalyses N-(5-phospho-beta-D-ribosyl)anthranilate + diphosphate = 5-phospho-alpha-D-ribose 1-diphosphate + anthranilate. Its pathway is amino-acid biosynthesis; L-tryptophan biosynthesis; L-tryptophan from chorismate: step 2/5. Its function is as follows. Catalyzes the transfer of the phosphoribosyl group of 5-phosphorylribose-1-pyrophosphate (PRPP) to anthranilate to yield N-(5'-phosphoribosyl)-anthranilate (PRA). This chain is Anthranilate phosphoribosyltransferase, found in Methylobacterium radiotolerans (strain ATCC 27329 / DSM 1819 / JCM 2831 / NBRC 15690 / NCIMB 10815 / 0-1).